We begin with the raw amino-acid sequence, 318 residues long: Serine protease 41 (318 aa).

Residues 1–19 (MGARGALLLALLLARAGLG) form the signal peptide. A propeptide spanning residues 20–54 (KPGELGALQAGPGAARRPGGGGREEACGHREIHAL) is cleaved from the precursor. Positions 55–297 (VAGGVESARG…YFHWIRRVMS (243 aa)) constitute a Peptidase S1 domain. The cysteines at positions 80 and 96 are disulfide-linked. Catalysis depends on charge relay system residues His-95 and Asp-147. 3 cysteine pairs are disulfide-bonded: Cys-181–Cys-255, Cys-215–Cys-234, and Cys-245–Cys-273. N-linked (GlcNAc...) asparagine glycosylation is present at Asn-211. Ser-249 serves as the catalytic Charge relay system. Asn-284 carries N-linked (GlcNAc...) asparagine glycosylation. Ser-299 carries GPI-anchor amidated serine lipidation. Positions 300-318 (TPRPNPSQLLLLLALLWAP) are cleaved as a propeptide — removed in mature form.

It belongs to the peptidase S1 family. Post-translationally, N-glycosylated.

The protein resides in the cell membrane. The chain is Serine protease 41 from Homo sapiens (Human).